The sequence spans 269 residues: WW domain-binding protein 1 (269 aa).

2 short sequence motifs (PPxY motif) span residues 124–127 (PPAY) and 137–141 (PPPPY). Disordered stretches follow at residues 169-203 (EGTN…PPSC) and 249-269 (PPES…GDIP). A compositionally biased stretch (polar residues) spans 174–183 (EGVSSHQSAP).

Interacts with NEDD4. Binds to the WW domain of YAP1, WWP1 and WWP2. Interacts with WWOX. Expressed in most tissues but at significantly lower levels in placenta, lung, liver, and kidney.

The sequence is that of WW domain-binding protein 1 (WBP1) from Homo sapiens (Human).